Here is a 176-residue protein sequence, read N- to C-terminus: Peptide deformylase (176 aa).

Cys-95 and His-137 together coordinate Fe cation. The active site involves Glu-138. Residue His-141 participates in Fe cation binding.

This sequence belongs to the polypeptide deformylase family. The cofactor is Fe(2+).

The enzyme catalyses N-terminal N-formyl-L-methionyl-[peptide] + H2O = N-terminal L-methionyl-[peptide] + formate. Its function is as follows. Removes the formyl group from the N-terminal Met of newly synthesized proteins. Requires at least a dipeptide for an efficient rate of reaction. N-terminal L-methionine is a prerequisite for activity but the enzyme has broad specificity at other positions. This is Peptide deformylase from Hyphomonas neptunium (strain ATCC 15444).